The chain runs to 309 residues: MAAQVRVLRQRIRTAKSMKKITKAMELVATSRIAKAQDQVAASLPYARAITEVLTALASNARIDHPLLTPRERVRRAGVLLITSDRGLAGGYSTNAIKTAESLLARLRADGKEPALYVIGRKGVQFYRFRNRPIAASWTGFSEQPTFADAREVGQTLIKVFTAGVDDADGDPGPDGVFGVDELHIVSTEFKSLMTQRPVAKILGPMQVEDRPRAEGLLPAYEFEPEAEALLDALLPKYINTRIYAALVESAASESASRRRAMKSANDNAVEMIEKYTREMNSARQAGITQEISEIVGGANALAASGSEV.

Belongs to the ATPase gamma chain family. In terms of assembly, F-type ATPases have 2 components, CF(1) - the catalytic core - and CF(0) - the membrane proton channel. CF(1) has five subunits: alpha(3), beta(3), gamma(1), delta(1), epsilon(1). CF(0) has three main subunits: a, b and c.

Its subcellular location is the cell membrane. Functionally, produces ATP from ADP in the presence of a proton gradient across the membrane. The gamma chain is believed to be important in regulating ATPase activity and the flow of protons through the CF(0) complex. The chain is ATP synthase gamma chain from Salinispora arenicola (strain CNS-205).